Consider the following 536-residue polypeptide: Bifunctional purine biosynthesis protein PurH (536 aa).

Positions 8–158 constitute an MGS-like domain; it reads IPAPDEVRIK…KNHAYVTVVT (151 aa).

The protein belongs to the PurH family.

It catalyses the reaction (6R)-10-formyltetrahydrofolate + 5-amino-1-(5-phospho-beta-D-ribosyl)imidazole-4-carboxamide = 5-formamido-1-(5-phospho-D-ribosyl)imidazole-4-carboxamide + (6S)-5,6,7,8-tetrahydrofolate. It carries out the reaction IMP + H2O = 5-formamido-1-(5-phospho-D-ribosyl)imidazole-4-carboxamide. The protein operates within purine metabolism; IMP biosynthesis via de novo pathway; 5-formamido-1-(5-phospho-D-ribosyl)imidazole-4-carboxamide from 5-amino-1-(5-phospho-D-ribosyl)imidazole-4-carboxamide (10-formyl THF route): step 1/1. It participates in purine metabolism; IMP biosynthesis via de novo pathway; IMP from 5-formamido-1-(5-phospho-D-ribosyl)imidazole-4-carboxamide: step 1/1. The sequence is that of Bifunctional purine biosynthesis protein PurH from Sinorhizobium medicae (strain WSM419) (Ensifer medicae).